The chain runs to 523 residues: Asc-type amino acid transporter 1 (523 aa).

Positions 1-28 (MAGHTQQPSGRGNPRPAPSPSPVPGTVP) are disordered. A compositionally biased stretch (pro residues) spans 15–25 (RPAPSPSPVPG). A run of 9 helical transmembrane segments spans residues 40–60 (IGLLSACTIIIGNIIGSGIFI), 72–92 (VGLALFVWVLGGGVTALGSLC), 113–133 (IFGGLAGFLLLWSAVLIMYPT), 268–288 (AIFISIPLVTFVYTFTNIAYF), 310–330 (LLGYFSWVMPVSVALSTFGGI), 362–382 (CTPIPALLVCCGATAVIMLVG), 388–408 (INYVSFINYLCYGVTILGLLL), 424–444 (LLIPVAYLVFWAFLLVFSFIS), and 448–468 (VCGVGVIIILTGVPIFFLGVF). The interval 499 to 523 (APEEEENGPCPPSLLPATDKPSKPQ) is disordered.

The protein belongs to the amino acid-polyamine-organocation (APC) superfamily. In terms of assembly, disulfide-linked heterodimer with the amino acid transport protein SLC3A2/4F2hc. Expressed in brain, heart, kidney, liver, lung, pancreas, placenta, and skeletal muscle.

The protein localises to the cell membrane. The catalysed reaction is L-alanine(in) + glycine(out) = L-alanine(out) + glycine(in). The enzyme catalyses L-serine(out) + L-alanine(in) = L-serine(in) + L-alanine(out). It catalyses the reaction L-threonine(out) + L-alanine(in) = L-threonine(in) + L-alanine(out). It carries out the reaction L-cysteine(out) + L-alanine(in) = L-cysteine(in) + L-alanine(out). The catalysed reaction is 2-aminoisobutanoate(out) + L-alanine(in) = 2-aminoisobutanoate(in) + L-alanine(out). The enzyme catalyses D-serine(out) + L-alanine(in) = D-serine(in) + L-alanine(out). It catalyses the reaction D-alanine(out) + L-alanine(in) = D-alanine(in) + L-alanine(out). It carries out the reaction L-valine(out) + L-alanine(in) = L-valine(in) + L-alanine(out). The catalysed reaction is L-methionine(out) + L-alanine(in) = L-methionine(in) + L-alanine(out). The enzyme catalyses beta-alanine(out) + L-alanine(in) = beta-alanine(in) + L-alanine(out). It catalyses the reaction D-cysteine(out) + L-alanine(in) = D-cysteine(in) + L-alanine(out). It carries out the reaction D-threonine(out) + L-alanine(in) = D-threonine(in) + L-alanine(out). The catalysed reaction is D-isoleucine(out) + D-serine(in) = D-isoleucine(in) + D-serine(out). The enzyme catalyses D-serine(in) = D-serine(out). Functionally, associates with SLC3A2/4F2hc to form a functional heterodimeric complex that translocates small neutral L- and D-amino acids across the plasma membrane. Preferentially mediates exchange transport, but can also operate via facilitated diffusion. Acts as a major transporter for glycine, L- and D-serine in the central nervous system. At the spinal cord and brainstem regulates glycine metabolism and glycinergic inhibitory neurotransmission by providing for glycine de novo synthesis from L-serine and glycine recycling from astrocytes to glycinergic motor neurons. At Schaffer collateral-CA1 synapses mediates D-serine and glycine release that modulates post-synaptic activation of NMDA receptors and excitatory glutamatergic transmission. May regulate D-serine release from mesenchymal progenitors located in developing subcutaneous adipose tissue, favoring white adipocyte over thermogenic beige adipocyte lineage commitment. This chain is Asc-type amino acid transporter 1 (SLC7A10), found in Homo sapiens (Human).